The primary structure comprises 348 residues: Ferredoxin--NADP reductase 1 (348 aa).

FAD-binding residues include Glu-36, Lys-44, Tyr-48, Ile-88, Pro-123, Asp-285, and Ser-326. Residues 329-348 (EKFKKKNEQLKQEKQAQLMN) form a disordered region.

It belongs to the ferredoxin--NADP reductase type 2 family. As to quaternary structure, homodimer. FAD serves as cofactor.

It catalyses the reaction 2 reduced [2Fe-2S]-[ferredoxin] + NADP(+) + H(+) = 2 oxidized [2Fe-2S]-[ferredoxin] + NADPH. This chain is Ferredoxin--NADP reductase 1, found in Shouchella clausii (strain KSM-K16) (Alkalihalobacillus clausii).